The chain runs to 244 residues: Claudin-12 (244 aa).

The Cytoplasmic portion of the chain corresponds to M1–T10. The helical transmembrane segment at V11–P31 threads the bilayer. The Extracellular segment spans residues N32–Q87. Residues F88 to M108 form a helical membrane-spanning segment. The Cytoplasmic segment spans residues C109 to V135. The helical transmembrane segment at A136–F156 threads the bilayer. Over Y157–A174 the chain is Extracellular. The helical transmembrane segment at V175–W195 threads the bilayer. Residues Y196–T244 are Cytoplasmic-facing. 2 positions are modified to phosphoserine: S228 and S231.

This sequence belongs to the claudin family. Interacts with OCLN.

The protein localises to the cell junction. It is found in the tight junction. It localises to the cell membrane. Plays a major role in tight junction-specific obliteration of the intercellular space, through calcium-independent cell-adhesion activity. The chain is Claudin-12 (Cldn12) from Mus musculus (Mouse).